We begin with the raw amino-acid sequence, 123 residues long: Preprofallaxidin-3 (123 aa).

A signal peptide spans 1–22 (MASLKKSLFLVLFLGLVSLSIC). Positions 23–46 (EEKKRENEDDAEDENHEEESEEKR) are excised as a propeptide. The interval 26–46 (KRENEDDAEDENHEEESEEKR) is disordered. Over residues 30–42 (EDDAEDENHEEES) the composition is skewed to acidic residues. Leu62 is modified (leucine amide). The propeptide occupies 66 to 70 (SEEKR). Phe74 is subject to Phenylalanine amide. Positions 78–82 (SEEKR) are excised as a propeptide. Residue Phe88 is modified to Phenylalanine amide. Positions 92 to 96 (SEEKR) are excised as a propeptide. Position 102 is an isoleucine amide (Ile102). A propeptide spanning residues 106–110 (SEEKR) is cleaved from the precursor. Isoleucine amide is present on Ile116. Positions 120-123 (KKKK) are excised as a propeptide.

Belongs to the frog skin active peptide (FSAP) family. Brevinin subfamily. Expressed by the skin glands.

Its subcellular location is the secreted. Functionally, fallaxidin-1.1 shows no antibacterial activity against Gram-positive or Gram-negative bacteria. Does not inhibit the formation of NO by neuronal nitric oxide synthase. Has no effect on splenocyte proliferation or smooth muscle contraction. In terms of biological role, fallaxidin-1.2 shows no antibacterial activity against Gram-positive or Gram-negative bacteria. Does not inhibit the formation of NO by neuronal nitric oxide synthase. Has no effect on splenocyte proliferation or smooth muscle contraction. Fallaxidin-1.3 shows no antibacterial activity against Gram-positive or Gram-negative bacteria. Does not inhibit the formation of NO by neuronal nitric oxide synthase. Has no effect on splenocyte proliferation or smooth muscle contraction. Its function is as follows. Fallaxidin-3.2 shows antibacterial activity against the Gram-positive bacteria E.faecalis (MIC=100 uM) and L.lactis (MIC=500 uM). No antibacterial activity against the Gram-positive bacteria B.cereus, L.innocua, M.luteus, S.epidermidis, S.uberis and S.aureus, or the Gram-negative bacteria E.cloacae and E.coli. This chain is Preprofallaxidin-3, found in Litoria fallax (Eastern dwarf tree frog).